Reading from the N-terminus, the 908-residue chain is Metabotropic glutamate receptor 8 (908 aa).

Positions 1-33 are cleaved as a signal peptide; it reads MVCEGKRLASCPCFFLLTAKFYWILTMMQRTHS. The Extracellular portion of the chain corresponds to 34–583; that stretch reads QEYAHSIRVD…IIKLEWHSPW (550 aa). A disulfide bridge links C64 with C106. An N-linked (GlcNAc...) asparagine glycan is attached at N95. L-glutamate-binding positions include S156, 177 to 179, and Y227; that span reads AST. 7 cysteine pairs are disulfide-bonded: C246-C534, C369-C384, C424-C431, C516-C535, C520-C538, C541-C553, and C556-C569. N-linked (GlcNAc...) asparagine glycosylation is present at N298. D309 contributes to the L-glutamate binding site. K401 contributes to the L-glutamate binding site. N452 and N480 each carry an N-linked (GlcNAc...) asparagine glycan. A glycan (N-linked (GlcNAc...) asparagine) is linked at N565. The helical transmembrane segment at 584-608 threads the bilayer; it reads AVVPVFIAILGIIATTFVIVTFVRY. The Cytoplasmic portion of the chain corresponds to 609-620; the sequence is NDTPIVRASGRE. The chain crosses the membrane as a helical span at residues 621–641; the sequence is LSYVLLTGIFLCYSITFLMIA. The Extracellular portion of the chain corresponds to 642–647; the sequence is APDTII. A helical membrane pass occupies residues 648-668; it reads CSFRRIFLGLGMCFSYAALLT. The Cytoplasmic portion of the chain corresponds to 669 to 695; it reads KTNRIHRIFEQGKKSVTAPKFISPASQ. A helical membrane pass occupies residues 696 to 716; sequence LVITFSLISVQLLGVFVWFVV. Residues 717-746 lie on the Extracellular side of the membrane; that stretch reads DPPHTIIDYGEQRTLDPENARGVLKCDISD. Residues 747–768 form a helical membrane-spanning segment; it reads LSLICSLGYSILLMVTCTVYAI. The Cytoplasmic portion of the chain corresponds to 769 to 781; sequence KTRGVPETFNEAK. The helical transmembrane segment at 782–803 threads the bilayer; it reads PIGFTMYTTCIIWLAFIPIFFG. Residues 804-818 lie on the Extracellular side of the membrane; sequence TAQSAEKMYIQTTTL. The chain crosses the membrane as a helical span at residues 819–843; the sequence is TVSMSLSASVSLGMLYMPKVYIIIF. The Cytoplasmic portion of the chain corresponds to 844-908; it reads HPEQNVQKRK…TYISYSNHSI (65 aa). Residue K882 forms a Glycyl lysine isopeptide (Lys-Gly) (interchain with G-Cter in SUMO1) linkage.

The protein belongs to the G-protein coupled receptor 3 family. In terms of assembly, interacts with PICK1. Prominent expression in olfactory bulb, pontine gray, lateral reticular nucleus of the thalamus, and piriform cortex. Less abundant expression incerebral cortex, hippocampus, cerebellum, and mammillary body.

It localises to the cell membrane. Functionally, G-protein coupled receptor for glutamate. Ligand binding causes a conformation change that triggers signaling via guanine nucleotide-binding proteins (G proteins) and modulates the activity of down-stream effectors. Signaling inhibits adenylate cyclase activity. In Rattus norvegicus (Rat), this protein is Metabotropic glutamate receptor 8 (Grm8).